A 184-amino-acid polypeptide reads, in one-letter code: NADH-quinone oxidoreductase subunit B (184 aa).

Residues Cys-63, Cys-64, Cys-128, and Cys-158 each coordinate [4Fe-4S] cluster.

Belongs to the complex I 20 kDa subunit family. In terms of assembly, NDH-1 is composed of 14 different subunits. Subunits NuoB, C, D, E, F, and G constitute the peripheral sector of the complex. Requires [4Fe-4S] cluster as cofactor.

The protein resides in the cell inner membrane. It catalyses the reaction a quinone + NADH + 5 H(+)(in) = a quinol + NAD(+) + 4 H(+)(out). Functionally, NDH-1 shuttles electrons from NADH, via FMN and iron-sulfur (Fe-S) centers, to quinones in the respiratory chain. The immediate electron acceptor for the enzyme in this species is believed to be ubiquinone. Couples the redox reaction to proton translocation (for every two electrons transferred, four hydrogen ions are translocated across the cytoplasmic membrane), and thus conserves the redox energy in a proton gradient. This is NADH-quinone oxidoreductase subunit B from Xylella fastidiosa (strain M23).